The following is a 239-amino-acid chain: Bidirectional sugar transporter SWEET8 (239 aa).

Residues 1–6 are Extracellular-facing; sequence MVDAKQ. Residues 7–27 form a helical membrane-spanning segment; the sequence is VRFIIGVIGNVISFGLFAAPA. Residues 9–98 form the MtN3/slv 1 domain; sequence FIIGVIGNVI…VYLMYCGHKK (90 aa). Residues 28-44 lie on the Cytoplasmic side of the membrane; that stretch reads KTFWRIFKKKSVEEFSY. Residues 45–65 form a helical membrane-spanning segment; sequence VPYVATVMNCMLWVFYGLPVV. The Extracellular portion of the chain corresponds to 66–69; sequence HKDS. A helical transmembrane segment spans residues 70-90; sequence ILVSTINGVGLVIELFYVGVY. Residues 91 to 103 lie on the Cytoplasmic side of the membrane; it reads LMYCGHKKNHRRN. Residues 104-124 form a helical membrane-spanning segment; that stretch reads ILGFLALEVILVVAIILITLF. Residues 125 to 135 are Extracellular-facing; it reads ALKGDFVKQTF. The 52-residue stretch at 134–185 folds into the MtN3/slv 2 domain; sequence TFVGVICDVFNIAMYGAPSLAIIKVVKTKSVEYMPFLLSLVCFVNAGIWTTY. Residues 136–156 form a helical membrane-spanning segment; that stretch reads VGVICDVFNIAMYGAPSLAII. Residues 157–168 lie on the Cytoplasmic side of the membrane; that stretch reads KVVKTKSVEYMP. A helical membrane pass occupies residues 169-189; it reads FLLSLVCFVNAGIWTTYSLIF. Residues 190–194 are Extracellular-facing; it reads KIDYY. A helical membrane pass occupies residues 195–215; it reads VLASNGIGTFLALSQLIVYFM. The Cytoplasmic segment spans residues 216–239; it reads YYKSTPKEKTVKPSEVEISATERV.

This sequence belongs to the SWEET sugar transporter family. As to quaternary structure, forms homooligomers and heterooligomers with SWEET4, SWEET5, SWEET6, SWEET7, SWEET9, SWEET10, SWEET11, SWEET13, SWEET15, SWEET16 and SWEET17. As to expression, expressed in inflorescences, embryo sacs and pollen, and at a lower level in stems. Barely detected in roots, leaves and seedlings.

Its subcellular location is the cell membrane. Mediates both low-affinity uptake and efflux of sugar across the plasma membrane. Required, in pollen, for microspore cell integrity and primexine pattern formation. The polypeptide is Bidirectional sugar transporter SWEET8 (Arabidopsis thaliana (Mouse-ear cress)).